We begin with the raw amino-acid sequence, 417 residues long: Tyrosine--tRNA ligase (417 aa).

Y39 is an L-tyrosine binding site. The 'HIGH' region signature appears at 44-53 (PTASSLHAGS). L-tyrosine contacts are provided by Y176 and Q180. A 'KMSKS' region motif is present at residues 236 to 240 (KMGKS). Residue K239 coordinates ATP. Positions 350-417 (AGLLALLVQA…KKKHVLIKPL (68 aa)) constitute an S4 RNA-binding domain.

It belongs to the class-I aminoacyl-tRNA synthetase family. TyrS type 1 subfamily. As to quaternary structure, homodimer.

The protein localises to the cytoplasm. The catalysed reaction is tRNA(Tyr) + L-tyrosine + ATP = L-tyrosyl-tRNA(Tyr) + AMP + diphosphate + H(+). Catalyzes the attachment of tyrosine to tRNA(Tyr) in a two-step reaction: tyrosine is first activated by ATP to form Tyr-AMP and then transferred to the acceptor end of tRNA(Tyr). In Bartonella quintana (strain Toulouse) (Rochalimaea quintana), this protein is Tyrosine--tRNA ligase.